We begin with the raw amino-acid sequence, 561 residues long: Type 2 DNA topoisomerase 6 subunit B (561 aa).

Residues Asn-46, Asp-78, 99-100 (TK), 109-116 (GQQGIGIS), and Lys-471 each bind ATP.

It belongs to the TOP6B family. Homodimer. Heterotetramer of two Top6A and two Top6B chains.

It carries out the reaction ATP-dependent breakage, passage and rejoining of double-stranded DNA.. Its function is as follows. Relaxes both positive and negative superturns and exhibits a strong decatenase activity. The protein is Type 2 DNA topoisomerase 6 subunit B of Thermococcus gammatolerans (strain DSM 15229 / JCM 11827 / EJ3).